We begin with the raw amino-acid sequence, 219 residues long: Octanoyltransferase (219 aa).

A BPL/LPL catalytic domain is found at 31-206 (TASADEIWLV…ECLRLMKASA (176 aa)). Substrate contacts are provided by residues 70–77 (RGGQVTFH), 137–139 (SLG), and 150–152 (GLA). The Acyl-thioester intermediate role is filled by Cys-168.

It belongs to the LipB family.

It localises to the cytoplasm. It catalyses the reaction octanoyl-[ACP] + L-lysyl-[protein] = N(6)-octanoyl-L-lysyl-[protein] + holo-[ACP] + H(+). It functions in the pathway protein modification; protein lipoylation via endogenous pathway; protein N(6)-(lipoyl)lysine from octanoyl-[acyl-carrier-protein]: step 1/2. In terms of biological role, catalyzes the transfer of endogenously produced octanoic acid from octanoyl-acyl-carrier-protein onto the lipoyl domains of lipoate-dependent enzymes. Lipoyl-ACP can also act as a substrate although octanoyl-ACP is likely to be the physiological substrate. This is Octanoyltransferase from Sodalis glossinidius (strain morsitans).